The following is a 295-amino-acid chain: Transcriptional regulator SirC (295 aa).

Residues 195–292 enclose the HTH araC/xylS-type domain; that stretch reads EKVYNIIISD…KITPLSFMRT (98 aa). 2 DNA-binding regions (H-T-H motif) span residues 212 to 233 and 259 to 282; these read AEVAGKLFMSVSSLKRKLAAEE and ISQVATMCGYDTPSYFIAIFKRHF.

Positive regulator of the expression of the invasion-associated type III secretion system encoded within SPI-1 (pathogenicity island 1). This Salmonella typhi protein is Transcriptional regulator SirC (sirC).